We begin with the raw amino-acid sequence, 84 residues long: Acyl-CoA-binding protein (84 aa).

The region spanning 1 to 84 is the ACB domain; sequence MTTFEEAAQK…LYEQLATKYA (84 aa). An acyl-CoA contacts are provided by residues lysine 12, 27-31, lysine 53, and tyrosine 72; that span reads YGLYK.

The protein belongs to the ACBP family. Interacts with dhkA.

Functionally, binds to acyl-CoA. Processed into the SDF-2 (spore differentiation factor 2) a peptide which triggers sporulation. SDF-2 appears to stimulate prestalk cells to release additional SDF-2 by acting through a signal transduction pathway that also involves dhkA, regA and PKA. Induces encapsulation of prespore cells in a dhkA-dependent manner. GABA induces the release of acbA from prespore cells and induces the exposure of tagC on the surface of prestalk cells where it can convert acbA to SDF-2. Glutamate acts as a competitive inhibitor and is also able to inhibit induction of sporulation by SDF-2. The polypeptide is Acyl-CoA-binding protein (acbA) (Dictyostelium discoideum (Social amoeba)).